Here is a 506-residue protein sequence, read N- to C-terminus: NAD(P)H-quinone oxidoreductase subunit 2, chloroplastic (506 aa).

13 helical membrane passes run 15-35 (LIPE…DLVY), 39-59 (CHAW…VLLG), 84-104 (LSLV…LLSI), 113-133 (APSE…LVAG), 137-157 (LLMM…LTGY), 172-192 (LLVG…MYGI), 217-237 (CALA…AAPF), 249-269 (PTPV…ILAV), 283-303 (WHLI…FIAV), 339-359 (IVYL…VILF), 382-402 (ALCL…AGFF), 418-438 (SLVW…LSVV), and 471-491 (VGIF…NSMV).

It belongs to the complex I subunit 2 family. NDH is composed of at least 16 different subunits, 5 of which are encoded in the nucleus.

It is found in the plastid. The protein localises to the chloroplast thylakoid membrane. It carries out the reaction a plastoquinone + NADH + (n+1) H(+)(in) = a plastoquinol + NAD(+) + n H(+)(out). The catalysed reaction is a plastoquinone + NADPH + (n+1) H(+)(in) = a plastoquinol + NADP(+) + n H(+)(out). Its function is as follows. NDH shuttles electrons from NAD(P)H:plastoquinone, via FMN and iron-sulfur (Fe-S) centers, to quinones in the photosynthetic chain and possibly in a chloroplast respiratory chain. The immediate electron acceptor for the enzyme in this species is believed to be plastoquinone. Couples the redox reaction to proton translocation, and thus conserves the redox energy in a proton gradient. This Nephroselmis olivacea (Green alga) protein is NAD(P)H-quinone oxidoreductase subunit 2, chloroplastic.